The chain runs to 259 residues: BTB/POZ domain-containing protein KCTD4 (259 aa).

Residues 33–134 enclose the BTB domain; sequence TLMTLNVGGY…EVKSRWEKEQ (102 aa).

The chain is BTB/POZ domain-containing protein KCTD4 (Kctd4) from Mus musculus (Mouse).